The sequence spans 452 residues: Pre-mRNA-splicing factor prp46 (452 aa).

Positions 61–70 are enriched in low complexity; that stretch reads AAKQAQAAAA. The tract at residues 61–129 is disordered; sequence AAKQAQAAAA…SATRQQPPEW (69 aa). Residues 114–125 show a composition bias toward polar residues; the sequence is SLIQRPSATRQQ. WD repeat units lie at residues 141-180, 183-222, 225-264, 267-308, 310-349, 350-388, and 399-438; these read GHLG…LRLT, GHIS…VIRH, GHLS…NIHV, GHTG…GVLT, HKKG…QNFE, GHNA…RYQT, and EAEA…TPET. A disordered region spans residues 432-452; that stretch reads DQATPETHPVTWAPTLGRQRY.

This sequence belongs to the WD repeat PRL1/PRL2 family. In terms of assembly, associated with the spliceosome.

It is found in the cytoplasm. The protein resides in the nucleus. Its function is as follows. Involved in pre-mRNA splicing and required for cell cycle progression at G2/M. The sequence is that of Pre-mRNA-splicing factor prp46 (prp46) from Emericella nidulans (strain FGSC A4 / ATCC 38163 / CBS 112.46 / NRRL 194 / M139) (Aspergillus nidulans).